The sequence spans 322 residues: Gluconeogenesis factor (322 aa).

NAD(+) is bound by residues threonine 13, 217–219 (NVM), 263–267 (KYAKE), and 300–301 (RH).

It belongs to the gluconeogenesis factor family.

The protein resides in the cytoplasm. Its function is as follows. Required for morphogenesis under gluconeogenic growth conditions. The protein is Gluconeogenesis factor of Halalkalibacterium halodurans (strain ATCC BAA-125 / DSM 18197 / FERM 7344 / JCM 9153 / C-125) (Bacillus halodurans).